The chain runs to 1342 residues: DNA-directed RNA polymerase subunit beta (1342 aa).

Belongs to the RNA polymerase beta chain family. As to quaternary structure, the RNAP catalytic core consists of 2 alpha, 1 beta, 1 beta' and 1 omega subunit. When a sigma factor is associated with the core the holoenzyme is formed, which can initiate transcription.

The enzyme catalyses RNA(n) + a ribonucleoside 5'-triphosphate = RNA(n+1) + diphosphate. In terms of biological role, DNA-dependent RNA polymerase catalyzes the transcription of DNA into RNA using the four ribonucleoside triphosphates as substrates. The chain is DNA-directed RNA polymerase subunit beta from Pectobacterium atrosepticum (strain SCRI 1043 / ATCC BAA-672) (Erwinia carotovora subsp. atroseptica).